An 849-amino-acid chain; its full sequence is Lysine-specific histone demethylase 1 homolog 1 (849 aa).

The tract at residues 1–118 (MEEGSEAQPP…RRRRKKQFPG (118 aa)) is disordered. Low complexity-rich tracts occupy residues 34-67 (GQAA…AADA) and 89-103 (PTSS…VDDS). Positions 106 to 115 (ARKRRRRKKQ) are enriched in basic residues. In terms of domain architecture, SWIRM spans 159 to 260 (ARELDAEALI…FGLAPSVISL (102 aa)). Positions 300, 302, 308, and 688 each coordinate FAD.

The protein belongs to the flavin monoamine oxidase family. Requires FAD as cofactor.

Probable histone demethylase. The chain is Lysine-specific histone demethylase 1 homolog 1 from Oryza sativa subsp. japonica (Rice).